The chain runs to 336 residues: Fructose-1,6-bisphosphatase class 1 (336 aa).

Residues glutamate 90, aspartate 112, leucine 114, and aspartate 115 each contribute to the Mg(2+) site. Substrate is bound by residues 115–118, asparagine 211, and lysine 277; that span reads DGSS. Position 283 (glutamate 283) interacts with Mg(2+).

The protein belongs to the FBPase class 1 family. Homotetramer. It depends on Mg(2+) as a cofactor.

Its subcellular location is the cytoplasm. The catalysed reaction is beta-D-fructose 1,6-bisphosphate + H2O = beta-D-fructose 6-phosphate + phosphate. Its pathway is carbohydrate biosynthesis; gluconeogenesis. This chain is Fructose-1,6-bisphosphatase class 1, found in Pseudomonas fluorescens (strain Pf0-1).